A 220-amino-acid chain; its full sequence is Large ribosomal subunit protein uL3 (220 aa).

Belongs to the universal ribosomal protein uL3 family. As to quaternary structure, part of the 50S ribosomal subunit. Forms a cluster with proteins L14 and L19.

Functionally, one of the primary rRNA binding proteins, it binds directly near the 3'-end of the 23S rRNA, where it nucleates assembly of the 50S subunit. The chain is Large ribosomal subunit protein uL3 from Staphylococcus haemolyticus (strain JCSC1435).